A 184-amino-acid polypeptide reads, in one-letter code: Peptide deformylase (184 aa).

Cys111 and His154 together coordinate Fe cation. Glu155 is a catalytic residue. His158 contributes to the Fe cation binding site.

This sequence belongs to the polypeptide deformylase family. Fe(2+) is required as a cofactor.

It carries out the reaction N-terminal N-formyl-L-methionyl-[peptide] + H2O = N-terminal L-methionyl-[peptide] + formate. In terms of biological role, removes the formyl group from the N-terminal Met of newly synthesized proteins. Requires at least a dipeptide for an efficient rate of reaction. N-terminal L-methionine is a prerequisite for activity but the enzyme has broad specificity at other positions. In Macrococcus caseolyticus (strain JCSC5402) (Macrococcoides caseolyticum), this protein is Peptide deformylase.